The chain runs to 508 residues: Probable ligand-gated ion channel 46 (508 aa).

Residues Met-1–Ala-18 form the signal peptide. The Extracellular segment spans residues Arg-19 to Tyr-274. N-linked (GlcNAc...) asparagine glycans are attached at residues Asn-65, Asn-134, Asn-175, and Asn-201. A disulfide bond links Cys-190 and Cys-204. The helical transmembrane segment at Ile-275–Leu-295 threads the bilayer. Residues Gly-296–Pro-301 are Cytoplasmic-facing. A helical membrane pass occupies residues Ala-302–Ile-321. Residues Ile-322–Asp-335 are Extracellular-facing. A helical transmembrane segment spans residues Val-336 to Gly-356. The Cytoplasmic segment spans residues Tyr-357 to Lys-480. The disordered stretch occupies residues Ala-374–Glu-407. Residues Ile-481–Trp-501 traverse the membrane as a helical segment. Topologically, residues Gln-502 to Tyr-508 are extracellular.

The protein belongs to the ligand-gated ion channel (TC 1.A.9) family. In terms of tissue distribution, expressed in the nervous system, with high expression in cholinergic motor neurons and weak expression in GABAergic motor neurons.

Its subcellular location is the presynaptic cell membrane. It is found in the cell projection. It localises to the axon. The protein resides in the cytoplasmic vesicle. The protein localises to the secretory vesicle. Its subcellular location is the synaptic vesicle. In terms of biological role, probable component of a ligand-gated anion channel. Negatively regulates synaptic transmission and synaptic vesicle release in response to acetylcholine in cholinergic motor neurons. Role in synaptic vesicle release kinetics may be in association with the ligand-gated ion channel protein acc-4. The chain is Probable ligand-gated ion channel 46 from Caenorhabditis elegans.